We begin with the raw amino-acid sequence, 271 residues long: 3-methyl-2-oxobutanoate hydroxymethyltransferase (271 aa).

Mg(2+) is bound by residues aspartate 50 and aspartate 89. 3-methyl-2-oxobutanoate contacts are provided by residues 50–51 (DS), aspartate 89, and lysine 118. Glutamate 120 contributes to the Mg(2+) binding site. The active-site Proton acceptor is glutamate 187.

This sequence belongs to the PanB family. As to quaternary structure, homodecamer; pentamer of dimers. Requires Mg(2+) as cofactor.

Its subcellular location is the cytoplasm. It catalyses the reaction 3-methyl-2-oxobutanoate + (6R)-5,10-methylene-5,6,7,8-tetrahydrofolate + H2O = 2-dehydropantoate + (6S)-5,6,7,8-tetrahydrofolate. Its pathway is cofactor biosynthesis; (R)-pantothenate biosynthesis; (R)-pantoate from 3-methyl-2-oxobutanoate: step 1/2. Its function is as follows. Catalyzes the reversible reaction in which hydroxymethyl group from 5,10-methylenetetrahydrofolate is transferred onto alpha-ketoisovalerate to form ketopantoate. The protein is 3-methyl-2-oxobutanoate hydroxymethyltransferase of Campylobacter concisus (strain 13826).